The following is a 305-amino-acid chain: tRNA pseudouridine synthase B (305 aa).

Asp39 serves as the catalytic Nucleophile. In terms of domain architecture, PUA spans 237–305 (LPVIIVPGEF…FLLKPHKVLK (69 aa)).

It belongs to the pseudouridine synthase TruB family. Type 1 subfamily.

It catalyses the reaction uridine(55) in tRNA = pseudouridine(55) in tRNA. Its function is as follows. Responsible for synthesis of pseudouridine from uracil-55 in the psi GC loop of transfer RNAs. In Moorella thermoacetica (strain ATCC 39073 / JCM 9320), this protein is tRNA pseudouridine synthase B.